The sequence spans 194 residues: Orotate phosphoribosyltransferase (194 aa).

117–125 (EDIVTTGLS) provides a ligand contact to 5-phospho-alpha-D-ribose 1-diphosphate. Orotate-binding residues include Thr121 and Arg149.

Belongs to the purine/pyrimidine phosphoribosyltransferase family. PyrE subfamily. Homodimer. Mg(2+) is required as a cofactor.

The enzyme catalyses orotidine 5'-phosphate + diphosphate = orotate + 5-phospho-alpha-D-ribose 1-diphosphate. It participates in pyrimidine metabolism; UMP biosynthesis via de novo pathway; UMP from orotate: step 1/2. Its function is as follows. Catalyzes the transfer of a ribosyl phosphate group from 5-phosphoribose 1-diphosphate to orotate, leading to the formation of orotidine monophosphate (OMP). This chain is Orotate phosphoribosyltransferase, found in Parvibaculum lavamentivorans (strain DS-1 / DSM 13023 / NCIMB 13966).